The sequence spans 306 residues: 17-beta-hydroxysteroid dehydrogenase type 3 (306 aa).

44-73 (GQWAVITGAGDGIGKAYSFELARHGLNVVL) contacts NADP(+). Serine 181 is a substrate binding site. The Proton acceptor role is filled by tyrosine 194.

The protein belongs to the short-chain dehydrogenases/reductases (SDR) family. 17-beta-HSD 3 subfamily.

The protein resides in the endoplasmic reticulum. The enzyme catalyses a 17beta-hydroxy steroid + NADP(+) = a 17-oxo steroid + NADPH + H(+). The catalysed reaction is testosterone + NADP(+) = androst-4-ene-3,17-dione + NADPH + H(+). It catalyses the reaction 17beta-estradiol + NADP(+) = estrone + NADPH + H(+). It carries out the reaction 3beta-hydroxyandrost-5-en-17-one + NADPH + H(+) = androst-5-en-3beta,17beta-diol + NADP(+). The enzyme catalyses 17beta-hydroxy-5alpha-androstan-3-one + NADP(+) = 5alpha-androstan-3,17-dione + NADPH + H(+). The catalysed reaction is androsterone + NADPH + H(+) = 5alpha-androstane-3alpha,17beta-diol + NADP(+). It catalyses the reaction 3beta-hydroxy-5alpha-androstan-17-one + NADPH + H(+) = 5alpha-androstane-3beta,17beta-diol + NADP(+). It carries out the reaction androst-4-ene-3,11,17-trione + NADPH + H(+) = 17beta-hydroxyandrost-4-ene-3,11-dione + NADP(+). The enzyme catalyses 11beta-hydroxyandrost-4-ene-3,17-dione + NADPH + H(+) = 11beta,17beta-dihydroxyandrost-4-ene-3-one + NADP(+). The protein operates within hormone biosynthesis; testosterone biosynthesis. It functions in the pathway steroid metabolism. Catalyzes the conversion of 17-oxosteroids to 17beta-hydroxysteroids. Favors the reduction of androstenedione to testosterone. Testosterone is the key androgen driving male development and function. Uses NADPH while the two other EDH17B enzymes use NADH. Androgens such as epiandrosterone, dehydroepiandrosterone, androsterone and androstanedione are accepted as substrates and reduced at C-17. Can reduce 11-ketoandrostenedione as well as 11beta-hydroxyandrostenedione at C-17 to the respective testosterone forms. Plays a role in the rate-limiting-step for the maximum level of testosterone production by the testis but does not affect basal testosterone production. This chain is 17-beta-hydroxysteroid dehydrogenase type 3, found in Rattus norvegicus (Rat).